Here is a 583-residue protein sequence, read N- to C-terminus: Membrane protein insertase YidC (583 aa).

A run of 6 helical transmembrane segments spans residues 5-25 (SVTG…FMSP), 341-361 (PFAE…VSNY), 362-382 (GLII…LSMA), 427-447 (IGGC…FYVF), 473-493 (FGFA…LMAV), and 520-540 (AMML…YLMF).

It belongs to the OXA1/ALB3/YidC family. Type 1 subfamily. As to quaternary structure, interacts with the Sec translocase complex via SecD. Specifically interacts with transmembrane segments of nascent integral membrane proteins during membrane integration.

It is found in the cell inner membrane. Required for the insertion and/or proper folding and/or complex formation of integral membrane proteins into the membrane. Involved in integration of membrane proteins that insert both dependently and independently of the Sec translocase complex, as well as at least some lipoproteins. Aids folding of multispanning membrane proteins. In Pelodictyon phaeoclathratiforme (strain DSM 5477 / BU-1), this protein is Membrane protein insertase YidC.